The chain runs to 421 residues: 4-hydroxy-3-methylbut-2-en-1-yl diphosphate synthase (flavodoxin) (421 aa).

The disordered stretch occupies residues 1–20 (MHDAVTRPTPPSDATSWPRR). Cys311, Cys314, Cys357, and Glu364 together coordinate [4Fe-4S] cluster.

The protein belongs to the IspG family. [4Fe-4S] cluster serves as cofactor.

The enzyme catalyses (2E)-4-hydroxy-3-methylbut-2-enyl diphosphate + oxidized [flavodoxin] + H2O + 2 H(+) = 2-C-methyl-D-erythritol 2,4-cyclic diphosphate + reduced [flavodoxin]. It functions in the pathway isoprenoid biosynthesis; isopentenyl diphosphate biosynthesis via DXP pathway; isopentenyl diphosphate from 1-deoxy-D-xylulose 5-phosphate: step 5/6. In terms of biological role, converts 2C-methyl-D-erythritol 2,4-cyclodiphosphate (ME-2,4cPP) into 1-hydroxy-2-methyl-2-(E)-butenyl 4-diphosphate. In Stenotrophomonas maltophilia (strain R551-3), this protein is 4-hydroxy-3-methylbut-2-en-1-yl diphosphate synthase (flavodoxin).